Here is a 277-residue protein sequence, read N- to C-terminus: UPF0276 protein PSEEN3355 (277 aa).

Belongs to the UPF0276 family.

This is UPF0276 protein PSEEN3355 from Pseudomonas entomophila (strain L48).